Here is a 1397-residue protein sequence, read N- to C-terminus: ABC transporter B family member 2 (1397 aa).

The tract at residues 1 to 117 is disordered; that stretch reads MSDKSNDGGE…KLDEGEKKEG (117 aa). Residues 24–39 are compositionally biased toward acidic residues; that stretch reads IDDENNNDINNQDDNE. Positions 37 to 69 form a coiled coil; sequence DNENNNNNNNNKNSDDNEENLKDYKNKKEDFGN. 2 stretches are compositionally biased toward basic and acidic residues: residues 49–79 and 107–117; these read NSDD…DDRP and KKLDEGEKKEG. 5 consecutive transmembrane segments (helical) span residues 137 to 157, 191 to 211, 273 to 293, 369 to 389, and 407 to 427; these read ILLM…MPAI, FIYI…FWML, FICG…VIFA, GIGI…SFWY, and WQGG…MALG. The region spanning 140 to 438 is the ABC transmembrane type-1 1 domain; the sequence is MIIGTIGALA…ASPNVASFAN (299 aa). The 237-residue stretch at 474–710 folds into the ABC transporter 1 domain; it reads IEYRNIGFSY…NGVYTQLVNR (237 aa). 509–516 is an ATP binding site; that stretch reads GDSGGGKS. Disordered stretches follow at residues 710–744 and 763–783; these read RQQK…SSIS and GLVN…PQEK. A compositionally biased stretch (low complexity) spans 735-744; sequence NNNIGPSSIS. 6 helical membrane passes run 801–821, 846–866, 922–942, 948–968, 1028–1048, and 1101–1121; these read FLIG…FSII, LWFI…IYCF, LGLL…AFVS, LVVL…MDFF, GLSF…TYWY, and VFFA…FMPD. An ABC transmembrane type-1 2 domain is found at 801–1124; the sequence is FLIGLVGATL…SMAFMPDLGK (324 aa). The region spanning 1159 to 1395 is the ABC transporter 2 domain; that stretch reads IEFKDIKFSY…NGFYAELVSR (237 aa). Position 1194–1201 (1194–1201) interacts with ATP; sequence GNSGGGKS.

The protein belongs to the ABC transporter superfamily. ABCB family. Multidrug resistance exporter (TC 3.A.1.201) subfamily.

The protein localises to the membrane. This Dictyostelium discoideum (Social amoeba) protein is ABC transporter B family member 2 (abcB2).